A 104-amino-acid chain; its full sequence is MSENWIDAAARDEVPRGRRDRHQYRRQGDCLYEVAGEIYATDNTCTHGAARMSDGFLEGREIECPLHQGRFDVCTGKALCTPLTQDIKTYPVKIENMRVMLKLD.

The tract at residues 1 to 21 (MSENWIDAAARDEVPRGRRDR) is disordered. The region spanning 5–101 (WIDAAARDEV…VKIENMRVML (97 aa)) is the Rieske domain. Positions 45, 47, 64, and 67 each coordinate [2Fe-2S] cluster.

Belongs to the bacterial ring-hydroxylating dioxygenase ferredoxin component family. The 2,4-dinitrotoluene dioxygenase (DNTDO) multicomponent enzyme system is composed of an electron transfer component and a dioxygenase component (iron sulfur protein (ISP)). The electron transfer component is composed of a ferredoxin reductase (DntAa) and a ferredoxin (DntAb), and the dioxygenase component is formed of a large alpha subunit (DntAc) and a small beta subunit (DntAd). Requires [2Fe-2S] cluster as cofactor.

Functionally, component of the 2,4-dinitrotoluene dioxygenase (DNTDO) multicomponent enzyme system which catalyzes the incorporation of both atoms of molecular oxygen into 2,4-dinitrotoluene (DNT) to form 4-methyl-5-nitrocatechol (MNC) and nitrite. Functions as an intermediate electron transfer protein via a specific interaction with iron sulfur protein components (ISP)(DntAc and DntAd). Also able to convert naphthalene to cis-(1R,2S)-dihydroxy-1,2-dihydronaphthalene. The polypeptide is 2,4-dinitrotoluene dioxygenase system, ferredoxin component (Burkholderia sp. (strain RASC)).